Consider the following 880-residue polypeptide: Pentatricopeptide repeat-containing protein At3g07290, mitochondrial (880 aa).

Residues 1 to 89 constitute a mitochondrion transit peptide; sequence MLLIHIRSTR…RSDNDICVRF (89 aa). PPR repeat units follow at residues 159–193, 194–228, 229–259, 265–299, 300–334, 335–369, 370–404, 405–439, 440–474, 475–509, 510–544, 545–579, 580–614, 615–649, 650–684, 685–721, 738–768, 772–806, and 807–842; these read NYPCYSSLLMSLAKLDLGFLAYVTYRRMEADGFVV, GMIDYRTIVNALCKNGYTEAAEMFMSKILKIGFVL, DSHIGTSLLLGFCRGLNLRDALKVFDVMSKE, NSVSYSILIHGLCEVGRLEEAFGLKDQMGEKGCQP, STRTYTVLIKALCDRGLIDKAFNLFDEMIPRGCKP, NVHTYTVLIDGLCRDGKIEEANGVCRKMVKDRIFP, SVITYNALINGYCKDGRVVPAFELLTVMEKRACKP, NVRTFNELMEGLCRVGKPYKAVHLLKRMLDNGLSP, DIVSYNVLIDGLCREGHMNTAYKLLSSMNCFDIEP, DCLTFTAIINAFCKQGKADVASAFLGLMLRKGISL, DEVTGTTLIDGVCKVGKTRDALFILETLVKMRILT, TPHSLNVILDMLSKGCKVKEELAMLGKINKLGLVP, SVVTYTTLVDGLIRSGDITGSFRILELMKLSGCLP, NVYPYTIIINGLCQFGRVEEAEKLLSAMQDSGVSP, NHVTYTVMVKGYVNNGKLDRALETVRAMVERGYEL, NDRIYSSLLQGFVLSQKGIDNSEESTVSDIALRETDP, ISGLCIFLVTRLCKEGRTDESNDLVQNVLER, LEKAMDIIMESYCSKKKHTKCMELITLVLKSGFVP, and SFKSFCLVIQGLKKEGDAERARELVMELLTSNGVVE.

This sequence belongs to the PPR family. P subfamily.

The protein localises to the mitochondrion. In Arabidopsis thaliana (Mouse-ear cress), this protein is Pentatricopeptide repeat-containing protein At3g07290, mitochondrial.